The chain runs to 317 residues: Gamma-glutamyl hydrolase (317 aa).

A signal peptide spans Met-1–Ser-24. One can recognise a Gamma-glutamyl hydrolase domain in the interval Gly-25–Asn-317. 2 N-linked (GlcNAc...) asparagine glycosylation sites follow: Asn-46 and Asn-100. The active-site Nucleophile is Cys-133. N-linked (GlcNAc...) asparagine glycosylation is found at Asn-153, Asn-162, Asn-188, and Asn-202. Catalysis depends on His-243, which acts as the Proton donor. Residue Asn-306 is glycosylated (N-linked (GlcNAc...) asparagine).

This sequence belongs to the peptidase C26 family. As to quaternary structure, homodimer.

It is found in the secreted. The protein localises to the extracellular space. It localises to the lysosome. The protein resides in the melanosome. The catalysed reaction is (6S)-5,6,7,8-tetrahydrofolyl-(gamma-L-Glu)(n) + (n-1) H2O = (6S)-5,6,7,8-tetrahydrofolate + (n-1) L-glutamate. Activity is altered by insulin and estrogen. Hydrolyzes the polyglutamate sidechains of pteroylpolyglutamates. Progressively removes gamma-glutamyl residues from pteroylpoly-gamma-glutamate to yield pteroyl-alpha-glutamate (folic acid) and free glutamate. May play an important role in the bioavailability of dietary pteroylpolyglutamates and in the metabolism of pteroylpolyglutamates and antifolates. Exhibits either endo- or exopeptidase activity depending upon the tissue of origin. When secreted, it acts primarily as an endopeptidase. This Rattus norvegicus (Rat) protein is Gamma-glutamyl hydrolase (Ggh).